The primary structure comprises 160 residues: uncharacterized protein (160 aa).

3 C2H2-type zinc fingers span residues 10–32 (LSCL…LPTH), 41–64 (QTCD…KRYH), and 75–98 (FQCQ…KIEH). Residue Tyr-115 is modified to Phosphotyrosine. Ser-116 carries the phosphoserine modification.

The protein localises to the nucleus. Functionally, may be involved in transcriptional regulation. This is an uncharacterized protein from Drosophila melanogaster (Fruit fly).